The following is a 354-amino-acid chain: Rhodopsin (354 aa).

The Extracellular segment spans residues 1-36; the sequence is MNGTEGPNFYVPMSNKTGVVRSPFDYPQYYLAEPWQ. N-linked (GlcNAc...) asparagine glycans are attached at residues N2 and N15. Residues 37–61 form a helical membrane-spanning segment; it reads YSALAAYMFLLILLGLPINFMTLFV. Residues 62-73 lie on the Cytoplasmic side of the membrane; that stretch reads TIQHKKLRTPLN. A helical transmembrane segment spans residues 74–96; the sequence is YILLNLVFANHFMVLCGFTVTMY. Residues 97 to 110 are Extracellular-facing; the sequence is TSMHGYFIFGPTGC. Residues C110 and C187 are joined by a disulfide bond. Residues 111-133 form a helical membrane-spanning segment; that stretch reads YIEGFFATLGGEVALWSLVVLAV. Residues 134 to 136 carry the 'Ionic lock' involved in activated form stabilization motif; it reads ERY. At 134–152 the chain is on the cytoplasmic side; sequence ERYIVVCKPMANFRFGENH. The helical transmembrane segment at 153–173 threads the bilayer; the sequence is AIMGVAFTWIMALSCAAPPLF. Topologically, residues 174–202 are extracellular; sequence GWSRYIPEGMQCSCGVDYYTLKPEVNNES. The chain crosses the membrane as a helical span at residues 203 to 224; sequence FVIYMFIVHFTIPLIVIFFCYG. The Cytoplasmic segment spans residues 225-252; that stretch reads RLLCTVKEAAAQQQESLTTQKAEKEVTR. The chain crosses the membrane as a helical span at residues 253–274; it reads MVVIMVVFFLICWVPYAYVAFY. Topologically, residues 275 to 286 are extracellular; sequence IFTHQGSNFGPV. Residues 287–308 traverse the membrane as a helical segment; sequence FMTVPAFFAKSSAIYNPVIYIV. Residue K296 is modified to N6-(retinylidene)lysine. Topologically, residues 309–354 are cytoplasmic; sequence LNKQFRNCLITTLCCGKNPFGDEDGSSAATSKTEASSVSSSQVSPA. 2 S-palmitoyl cysteine lipidation sites follow: C322 and C323. The disordered stretch occupies residues 331–354; sequence EDGSSAATSKTEASSVSSSQVSPA. Low complexity predominate over residues 334–354; the sequence is SSAATSKTEASSVSSSQVSPA.

This sequence belongs to the G-protein coupled receptor 1 family. Opsin subfamily. Contains one covalently linked retinal chromophore. Upon light absorption, the covalently bound 11-cis-retinal is converted to all-trans-retinal. After hydrolysis of the Schiff base and release of the covalently bound all-trans-retinal, active rhodopsin is regenerated by binding of a fresh molecule of 11-cis-retinal.

The protein resides in the membrane. It is found in the cell projection. It localises to the cilium. The protein localises to the photoreceptor outer segment. Its function is as follows. Photoreceptor required for image-forming vision at low light intensity. Required for photoreceptor cell viability after birth. Light-induced isomerization of 11-cis to all-trans retinal triggers a conformational change that activates signaling via G-proteins. Subsequent receptor phosphorylation mediates displacement of the bound G-protein alpha subunit by arrestin and terminates signaling. This is Rhodopsin (rho) from Xenopus laevis (African clawed frog).